Reading from the N-terminus, the 278-residue chain is MPELPEVETSRRGIEPYLVGQTILYAVVRNARLRWPVSDEILTLSDQPVLSVQRRAKYLLLELPKGWIIIHLGMSGSLRVLSEETAAEKHDHVDLVVSNGKILRYTDPRRFGAWLWAKDLETSNVLAHLGPEPLSDEFTAQYLFDKSRNKRTLIKPWLMDNKVVVGVGNIYASESLFAAGILPDRAAGSLTDAESVLLVATIKAVLLHSIEQGGTTLRDFLQSDGKPGYFAQELQVYGRAGEPCRQCGHPIEIAKHGQRSTFFCRHCQFRPIWPIMLW.

The active-site Schiff-base intermediate with DNA is the proline 2. Glutamate 3 (proton donor) is an active-site residue. Lysine 57 functions as the Proton donor; for beta-elimination activity in the catalytic mechanism. Residues histidine 90, arginine 109, and lysine 150 each coordinate DNA. Residues 235 to 269 form an FPG-type zinc finger; it reads QVYGRAGEPCRQCGHPIEIAKHGQRSTFFCRHCQF. The active-site Proton donor; for delta-elimination activity is the arginine 259.

Belongs to the FPG family. As to quaternary structure, monomer. It depends on Zn(2+) as a cofactor.

It catalyses the reaction Hydrolysis of DNA containing ring-opened 7-methylguanine residues, releasing 2,6-diamino-4-hydroxy-5-(N-methyl)formamidopyrimidine.. It carries out the reaction 2'-deoxyribonucleotide-(2'-deoxyribose 5'-phosphate)-2'-deoxyribonucleotide-DNA = a 3'-end 2'-deoxyribonucleotide-(2,3-dehydro-2,3-deoxyribose 5'-phosphate)-DNA + a 5'-end 5'-phospho-2'-deoxyribonucleoside-DNA + H(+). Functionally, involved in base excision repair of DNA damaged by oxidation or by mutagenic agents. Acts as a DNA glycosylase that recognizes and removes damaged bases. Has a preference for oxidized purines, such as 7,8-dihydro-8-oxoguanine (8-oxoG). Has AP (apurinic/apyrimidinic) lyase activity and introduces nicks in the DNA strand. Cleaves the DNA backbone by beta-delta elimination to generate a single-strand break at the site of the removed base with both 3'- and 5'-phosphates. The protein is Formamidopyrimidine-DNA glycosylase of Yersinia pestis (strain Pestoides F).